We begin with the raw amino-acid sequence, 334 residues long: Transaldolase (334 aa).

An N-acetylserine modification is found at serine 2. Lysine 143 (schiff-base intermediate with substrate) is an active-site residue.

The protein belongs to the transaldolase family. Type 1 subfamily. In terms of assembly, homodimer.

It catalyses the reaction D-sedoheptulose 7-phosphate + D-glyceraldehyde 3-phosphate = D-erythrose 4-phosphate + beta-D-fructose 6-phosphate. Its pathway is carbohydrate degradation; pentose phosphate pathway; D-glyceraldehyde 3-phosphate and beta-D-fructose 6-phosphate from D-ribose 5-phosphate and D-xylulose 5-phosphate (non-oxidative stage): step 2/3. Functionally, transaldolase is important for the balance of metabolites in the pentose-phosphate pathway. The protein is Transaldolase (TAL1) of Kluyveromyces lactis (strain ATCC 8585 / CBS 2359 / DSM 70799 / NBRC 1267 / NRRL Y-1140 / WM37) (Yeast).